A 118-amino-acid polypeptide reads, in one-letter code: Small ribosomal subunit protein eS10 (118 aa).

Residues 91-118 (RLKNAPAERPRPSRGGPRRGGYRGRARD) are disordered. Residues 106–118 (GPRRGGYRGRARD) show a composition bias toward basic residues.

It belongs to the eukaryotic ribosomal protein eS10 family. As to quaternary structure, component of the small ribosomal subunit. Mature ribosomes consist of a small (40S) and a large (60S) subunit. The 40S subunit contains about 32 different proteins and 1 molecule of RNA (18S). The 60S subunit contains 45 different proteins and 3 molecules of RNA (25S, 5.8S and 5S).

It is found in the cytoplasm. Functionally, component of the ribosome, a large ribonucleoprotein complex responsible for the synthesis of proteins in the cell. The small ribosomal subunit (SSU) binds messenger RNAs (mRNAs) and translates the encoded message by selecting cognate aminoacyl-transfer RNA (tRNA) molecules. The large subunit (LSU) contains the ribosomal catalytic site termed the peptidyl transferase center (PTC), which catalyzes the formation of peptide bonds, thereby polymerizing the amino acids delivered by tRNAs into a polypeptide chain. The nascent polypeptides leave the ribosome through a tunnel in the LSU and interact with protein factors that function in enzymatic processing, targeting, and the membrane insertion of nascent chains at the exit of the ribosomal tunnel. The protein is Small ribosomal subunit protein eS10 (RPS10) of Candida albicans (strain SC5314 / ATCC MYA-2876) (Yeast).